A 73-amino-acid chain; its full sequence is Crustacean hyperglycemic hormone (73 aa).

Cystine bridges form between Cys7–Cys43, Cys23–Cys39, and Cys26–Cys52. Serine amide is present on Ser73.

In terms of tissue distribution, produced by the medulla terminalis X-organ in the eyestalks and transported to the sinus gland where they are stored and released. Found also in the brain; in the neuroendocrine structures of the protocerebrum.

It localises to the secreted. In terms of biological role, hormone found in the sinus gland of isopods and decapods which controls the blood sugar level. Has a secretagogue action over the amylase released from the midgut gland. May act as a stress hormone and may be involved in the control of molting and reproduction. This chain is Crustacean hyperglycemic hormone, found in Armadillidium vulgare (Pillbug).